A 350-amino-acid polypeptide reads, in one-letter code: Cobalt-precorrin-5B C(1)-methyltransferase (350 aa).

This sequence belongs to the CbiD family.

It catalyses the reaction Co-precorrin-5B + S-adenosyl-L-methionine = Co-precorrin-6A + S-adenosyl-L-homocysteine. The protein operates within cofactor biosynthesis; adenosylcobalamin biosynthesis; cob(II)yrinate a,c-diamide from sirohydrochlorin (anaerobic route): step 6/10. Functionally, catalyzes the methylation of C-1 in cobalt-precorrin-5B to form cobalt-precorrin-6A. In Sulfurisphaera tokodaii (strain DSM 16993 / JCM 10545 / NBRC 100140 / 7) (Sulfolobus tokodaii), this protein is Cobalt-precorrin-5B C(1)-methyltransferase.